Consider the following 241-residue polypeptide: DNA repair protein RecO (241 aa).

It belongs to the RecO family.

Functionally, involved in DNA repair and RecF pathway recombination. The polypeptide is DNA repair protein RecO (Azobacteroides pseudotrichonymphae genomovar. CFP2).